We begin with the raw amino-acid sequence, 473 residues long: Ribulose bisphosphate carboxylase large chain (473 aa).

Residues N116 and T166 each coordinate substrate. K168 (proton acceptor) is an active-site residue. K170 contacts substrate. Residues K194, D196, and E197 each coordinate Mg(2+). K194 bears the N6-carboxylysine mark. H287 functions as the Proton acceptor in the catalytic mechanism. 3 residues coordinate substrate: R288, H320, and S372.

Belongs to the RuBisCO large chain family. Type I subfamily. As to quaternary structure, heterohexadecamer of 8 large chains and 8 small chains. In R.sphaeroides the complex is approximately 500 kDa. Mg(2+) serves as cofactor.

The enzyme catalyses 2 (2R)-3-phosphoglycerate + 2 H(+) = D-ribulose 1,5-bisphosphate + CO2 + H2O. It catalyses the reaction D-ribulose 1,5-bisphosphate + O2 = 2-phosphoglycolate + (2R)-3-phosphoglycerate + 2 H(+). RuBisCO catalyzes two reactions: the carboxylation of D-ribulose 1,5-bisphosphate, the primary event in carbon dioxide fixation, as well as the oxidative fragmentation of the pentose substrate. Both reactions occur simultaneously and in competition at the same active site. The polypeptide is Ribulose bisphosphate carboxylase large chain (Thiobacillus denitrificans (strain ATCC 25259 / T1)).